The primary structure comprises 363 residues: Chorismate synthase (363 aa).

Arginine 47 is an NADP(+) binding site. FMN-binding positions include 124-126 (RAS), glycine 286, 301-305 (KPTAT), and arginine 327.

The protein belongs to the chorismate synthase family. In terms of assembly, homotetramer. It depends on FMNH2 as a cofactor.

The enzyme catalyses 5-O-(1-carboxyvinyl)-3-phosphoshikimate = chorismate + phosphate. Its pathway is metabolic intermediate biosynthesis; chorismate biosynthesis; chorismate from D-erythrose 4-phosphate and phosphoenolpyruvate: step 7/7. Catalyzes the anti-1,4-elimination of the C-3 phosphate and the C-6 proR hydrogen from 5-enolpyruvylshikimate-3-phosphate (EPSP) to yield chorismate, which is the branch point compound that serves as the starting substrate for the three terminal pathways of aromatic amino acid biosynthesis. This reaction introduces a second double bond into the aromatic ring system. This Prochlorococcus marinus (strain MIT 9211) protein is Chorismate synthase.